The chain runs to 2465 residues: MNTEELELLSDSKYRNYVAAIDKALKNFEYSSEWADLISALGKLNKVLQNNAKYQVVPKKLTIGKRLAQCLHPALPGGVHRKALETYEIIFKIIGPKRLAKDLFLYSSGLFPLLANAAMSVKPTLLSLYEIYYLPLGKTLKPGLQGLLTGILPGLEEGSEYYERTNMLLEKVAAAVDQSAFYSALWGSLLTSPAVRLPGITYVLAHLNRKLSMEDQLYIIGSDIELMVEAVSTSVQDSSVLVQRSTLDLILFCFPFHMSQATRPDMIRILSAALHVVLRRDMSLNRRLYAWLLGFDNNGAIIGPRSTRHSNPEEHATYYFTTFSKELLVQAMVGILQVNGFGEENTLMQDLKPFRILISLLDKPELGPVILEDVLIEVFRTLYSQCKAELDLQTEPPFSKDHAQLSSKLRENKKTAELIKTANLLFNSFEPYYMWDYVARWFEECCRRTLHVRLQIGPGDSNDSSELQLTNFCLLVDFLLDIVSLPTRSMRVLCQETYIEIQTEHLPQLLLRMISALTSHLQTLHLSELTDSLRLCSKILSKVQPPLLSASTGGVLQFPSGQNNSVKEWEDKKVSSVSHENPTEVFEDGENPPSSRSSESGFTEFIQYQADRTDDIDRELSEGQGAAAIPIGSTSSETETASTVGSEETIIQTPSVVTQGTATRSRKTAQKTAMQCCLEYVQQFLTRLINLYIIQNNSFSQSLATEHQGDLGREQGETSKWDRNSQGDVKEKNISKQKTSKEYLSAFLAACQLFLECSSFPVYIAEGNHTSELRSEKLETDCEHVQPPQWLQTLMNACSQASDFSVQSVAISLVMDLVGLTQSVAMVTGENINSVEPAQPLSPNQGRVAVVIRPPLTQGNLRYIAEKTEFFKHVALTLWDQLGDGTPQHHQKSVELFYQLHNLVPSSSICEDVISQQLTHKDKKIRMEAHAKFAVLWHLTRDLHINKSSSFVRSFDRSLFIMLDSLNSLDGSTSSVGQAWLNQVLQRHDIARVLEPLLLLLLHPKTQRVSVQRVQAERYWNKSPCYPGEESDKHFMQNFACSNVSQVQLITSKGNGEKPLTMDEIENFSLTVNPLSDRLSLLSTSSETIPMVVSDFDLPDQQIEILQSSDSGCSQSSAGDNLSYEVDPETVNAQEDSQMPKESSPDDDVQQVVFDLICKVVSGLEVESASVTSQLEIEAMPPKCSDIDPDEETIKIEDDSIQQSQNALLSNESSQFLSVSAEGGHECVANGISRNSSSPCISGTTHTLHDSSVASIETKSRQRSHSSIQFSFKEKLSEKVSEKETIVKESGKQPGAKPKVKLARKKDDDKKKSSNEKLKQTSVFFSDGLDLENWYSCGEGDISEIESDMGSPGSRKSPNFNIHPLYQHVLLYLQLYDSSRTLYAFSAIKAILKTNPIAFVNAISTTSVNNAYTPQLSLLQNLLARHRISVMGKDFYSHIPVDSNHNFRSSMYIEILISLCLYYMRSHYPTHVKVTAQDLIGNRNMQMMSIEILTLLFTELAKVIESSAKGFPSFISDMLSKCKVQKVILHCLLSSIFSAQKWHSEKMAGKNLVAVEEGFSEDSLINFSEDEFDNGSTLQSQLLKVLQRLIVLEHRVMTIPEENETGFDFVVSDLEHISPHQPMTSLQYLHAQPITCQGMFLCAVIRALHQHCACKMHPQWIGLITSTLPYMGKVLQRVVVSVTLQLCRNLDNLIQQYKYETGLSDSRPLWMASIIPPDMILTLLEGITAIIHYCLLDPTTQYHQLLVSVDQKHLFEARSGILSILHMIMSSVTLLWSILHQADSSEKMTIAASASLTTINLGATKNLRQQILELLGPISMNHGVHFMAAIAFVWNERRQNKTTTRTKVIPAASEEQLLLVELVRSISVMRAETVIQTVKEVLKQPPAIAKDKKHLSLEVCMLQFFYAYIQRIPVPNLVDSWASLLILLKDSIQLSLPAPGQFLILGVLNEFIMKNPSLENKKDQRDLQDVTHKIVDAIGAIAGSSLEQTTWLRRNLEVKPSPKIMVDGTNLESDVEDMLSPAMETANITPSVYSVHALTLLSEVLAHLLDMVFYSDEKERVIPLLVNIMHYVVPYLRNHSAHNAPSYRACVQLLSSLSGYQYTRRAWKKEAFDLFMDPSFFQMDASCVNHWRAIMDNLMTHDKTTFRDLMTRVAVAQSSSLNLFANRDVELEQRAMLLKRLAFAIFSSEIDQYQKYLPDIQERLVESLRLPQVPTLHSQVFLFFRVLLLRMSPQHLTSLWPTMITELVQVFLLMEQELTADEDISRTSGPSVAGLETTYTGGNGFSTSYNSQRWLNLYLSACKFLDLALALPSENLPQFQMYRWAFIPEASDDSGLEVRRQGIHQREFKPYVVRLAKLLRKRAKKNPEEDNSGRTLGWEPGHLLLTICTVRSMEQLLPFFNVLSQVFNSKVTSRCGGHSGSPILYSNAFPNKDMKLENHKPCSSKARQKIEEMVEKDFLEGMIKT.

Disordered stretches follow at residues 559-600, 625-646, and 705-733; these read PSGQ…SSES, GAAA…TVGS, and TEHQ…KEKN. A compositionally biased stretch (low complexity) spans 633-646; sequence STSSETETASTVGS. A compositionally biased stretch (basic and acidic residues) spans 707 to 733; it reads HQGDLGREQGETSKWDRNSQGDVKEKN. Position 1266 is a phosphoserine (Ser1266). Basic and acidic residues-rich tracts occupy residues 1282 to 1291 and 1305 to 1315; these read EKETIVKESG and KKDDDKKKSSN. The segment at 1282–1315 is disordered; that stretch reads EKETIVKESGKQPGAKPKVKLARKKDDDKKKSSN.

This sequence belongs to the DOP1 family.

Its subcellular location is the golgi apparatus membrane. Its function is as follows. May be involved in protein traffic between late Golgi and early endosomes. The chain is Protein DOP1A from Homo sapiens (Human).